The primary structure comprises 307 residues: Protease HtpX homolog (307 aa).

Residues 16 to 36 (LFMGVGYLIGGAAGAMIALVV) traverse the membrane as a helical segment. Residue histidine 130 coordinates Zn(2+). Glutamate 131 is a catalytic residue. Histidine 134 provides a ligand contact to Zn(2+). A run of 2 helical transmembrane segments spans residues 145–165 (ITAT…FFGG) and 172–192 (GPGI…AMLV). Glutamate 201 contributes to the Zn(2+) binding site. A disordered region spans residues 278 to 307 (AGQSGSATPDPAPAPRGPWNGGAPRRGPWG).

It belongs to the peptidase M48B family. Zn(2+) serves as cofactor.

It is found in the cell inner membrane. The polypeptide is Protease HtpX homolog (Nitrobacter hamburgensis (strain DSM 10229 / NCIMB 13809 / X14)).